Reading from the N-terminus, the 336-residue chain is Glucokinase (336 aa).

13–18 provides a ligand contact to ATP; it reads ADVGGT.

This sequence belongs to the bacterial glucokinase family.

The protein localises to the cytoplasm. It carries out the reaction D-glucose + ATP = D-glucose 6-phosphate + ADP + H(+). This chain is Glucokinase, found in Cupriavidus metallidurans (strain ATCC 43123 / DSM 2839 / NBRC 102507 / CH34) (Ralstonia metallidurans).